The primary structure comprises 126 residues: Large ribosomal subunit protein eL18 (126 aa).

It belongs to the eukaryotic ribosomal protein eL18 family.

The sequence is that of Large ribosomal subunit protein eL18 from Methanosarcina acetivorans (strain ATCC 35395 / DSM 2834 / JCM 12185 / C2A).